A 262-amino-acid polypeptide reads, in one-letter code: NADPH-dependent 7-cyano-7-deazaguanine reductase (262 aa).

Substrate is bound at residue 69-71 (IES). 71 to 72 (SK) contributes to the NADPH binding site. Cys170 functions as the Thioimide intermediate in the catalytic mechanism. The Proton donor role is filled by Asp177. 209-210 (HE) provides a ligand contact to substrate. 238 to 239 (RG) is a binding site for NADPH.

The protein belongs to the GTP cyclohydrolase I family. QueF type 2 subfamily. In terms of assembly, homodimer.

It is found in the cytoplasm. It carries out the reaction 7-aminomethyl-7-carbaguanine + 2 NADP(+) = 7-cyano-7-deazaguanine + 2 NADPH + 3 H(+). Its pathway is tRNA modification; tRNA-queuosine biosynthesis. In terms of biological role, catalyzes the NADPH-dependent reduction of 7-cyano-7-deazaguanine (preQ0) to 7-aminomethyl-7-deazaguanine (preQ1). This Buchnera aphidicola subsp. Schizaphis graminum (strain Sg) protein is NADPH-dependent 7-cyano-7-deazaguanine reductase.